The primary structure comprises 237 residues: Phosphoribosylaminoimidazole-succinocarboxamide synthase (237 aa).

Belongs to the SAICAR synthetase family.

It carries out the reaction 5-amino-1-(5-phospho-D-ribosyl)imidazole-4-carboxylate + L-aspartate + ATP = (2S)-2-[5-amino-1-(5-phospho-beta-D-ribosyl)imidazole-4-carboxamido]succinate + ADP + phosphate + 2 H(+). It functions in the pathway purine metabolism; IMP biosynthesis via de novo pathway; 5-amino-1-(5-phospho-D-ribosyl)imidazole-4-carboxamide from 5-amino-1-(5-phospho-D-ribosyl)imidazole-4-carboxylate: step 1/2. This chain is Phosphoribosylaminoimidazole-succinocarboxamide synthase, found in Shigella sonnei (strain Ss046).